Consider the following 260-residue polypeptide: tRNA pseudouridine synthase A (260 aa).

Asp51 acts as the Nucleophile in catalysis. A substrate-binding site is contributed by Tyr109.

This sequence belongs to the tRNA pseudouridine synthase TruA family. Homodimer.

It carries out the reaction uridine(38/39/40) in tRNA = pseudouridine(38/39/40) in tRNA. Functionally, formation of pseudouridine at positions 38, 39 and 40 in the anticodon stem and loop of transfer RNAs. This Methylibium petroleiphilum (strain ATCC BAA-1232 / LMG 22953 / PM1) protein is tRNA pseudouridine synthase A.